The following is a 394-amino-acid chain: 4-hydroxyphenylpyruvate dioxygenase (394 aa).

VOC domains lie at 27 to 161 (GYDH…LIER) and 193 to 351 (HIDH…LFTK). The Fe cation site is built by His196, His279, and Glu362.

The protein belongs to the 4HPPD family. The cofactor is Fe cation.

The catalysed reaction is 3-(4-hydroxyphenyl)pyruvate + O2 = homogentisate + CO2. It participates in amino-acid degradation; L-phenylalanine degradation; acetoacetate and fumarate from L-phenylalanine: step 3/6. In Yarrowia lipolytica (strain CLIB 122 / E 150) (Yeast), this protein is 4-hydroxyphenylpyruvate dioxygenase.